Here is a 229-residue protein sequence, read N- to C-terminus: AA9 family lytic polysaccharide monooxygenase E (229 aa).

The first 19 residues, 1-19, serve as a signal peptide directing secretion; the sequence is MRSSDITFVLLSVVATVRS. Cu(2+) is bound at residue H20. An intrachain disulfide couples C57 to C178. N76 is a glycosylation site (N-linked (GlcNAc...) asparagine). Cu(2+) is bound at residue H99. O2 is bound by residues H164 and Q173. Y175 is a Cu(2+) binding site. N217 carries N-linked (GlcNAc...) asparagine glycosylation.

It belongs to the polysaccharide monooxygenase AA9 family. Requires Cu(2+) as cofactor.

It is found in the secreted. The enzyme catalyses [(1-&gt;4)-beta-D-glucosyl]n+m + reduced acceptor + O2 = 4-dehydro-beta-D-glucosyl-[(1-&gt;4)-beta-D-glucosyl]n-1 + [(1-&gt;4)-beta-D-glucosyl]m + acceptor + H2O.. In terms of biological role, lytic polysaccharide monooxygenase (LPMO) that depolymerizes crystalline and amorphous polysaccharides via the oxidation of scissile alpha- or beta-(1-4)-glycosidic bonds, yielding C1 and C4 oxidation products. Catalysis by LPMOs requires the reduction of the active-site copper from Cu(II) to Cu(I) by a reducing agent and H(2)O(2) or O(2) as a cosubstrate. The sequence is that of AA9 family lytic polysaccharide monooxygenase E from Botryotinia fuckeliana (strain B05.10) (Noble rot fungus).